We begin with the raw amino-acid sequence, 157 residues long: MILTVKPLQGKECNVQVTENEKVSTVKELVSERLNIPASQQRLLYKGKALADEHRLSDYSIGPEAKLNLVVRPAGERSSGAVGTSSANNDKGGSGVWQLLSTVLAKHFSPADAAKVQEQLIKDYERSLRQLSLDDIERLASRLLHPETEVMDTSYMD.

Residues 1-76 (MILTVKPLQG…LNLVVRPAGE (76 aa)) enclose the Ubiquitin-like domain.

Component of the bag6/bat3 complex.

Its subcellular location is the cytoplasm. It localises to the cytosol. It is found in the nucleus. In terms of biological role, as part of a cytosolic protein quality control complex, the bag6/bat3 complex, maintains misfolded and hydrophobic patches-containing proteins in a soluble state and participates in their proper delivery to the endoplasmic reticulum or alternatively can promote their sorting to the proteasome where they undergo degradation. The bag6/bat3 complex is involved in the post-translational delivery of tail-anchored/type II transmembrane proteins to the endoplasmic reticulum membrane. Similarly, the bag6/bat3 complex also functions as a sorting platform for proteins of the secretory pathway that are mislocalized to the cytosol either delivering them to the proteasome for degradation or to the endoplasmic reticulum. The bag6/bat3 complex also plays a role in the endoplasmic reticulum-associated degradation (ERAD), a quality control mechanism that eliminates unwanted proteins of the endoplasmic reticulum through their retrotranslocation to the cytosol and their targeting to the proteasome. It maintains these retrotranslocated proteins in an unfolded yet soluble state condition in the cytosol to ensure their proper delivery to the proteasome. In Danio rerio (Zebrafish), this protein is Ubiquitin-like protein 4A (ubl4a).